The chain runs to 154 residues: Troponin C, isoallergen Bla g 6.0301 (154 aa).

4 consecutive EF-hand domains span residues 11–46 (EQISVLRKAFDAFDREKSGSISTNMVEEILRLMGQP), 47–82 (FNRRTLEELIDEVDADKSGRLEFDEFVTLAAKFIIE), 87–122 (AMEKELREAFRLYDKEGNGYIPTSCLREILRELDEQ), and 123–154 (LTSDELDMMIEEIDADGSGTVDFDEFMEMMTG). Residues Asp60, Asp62, Ser64, Arg66, and Glu71 each coordinate Ca(2+). Residues Asp136, Asp138, Ser140, Thr142, and Glu147 each coordinate Ca(2+).

Belongs to the troponin C family.

Troponin is the central regulatory protein of striated muscle contraction. It consists of three components: Troponin-I (Tn-I) which is the inhibitor of actomyosin ATPase, Troponin-T (Tn-T) which contains the binding site for tropomyosin and Troponin-C (Tn-C). The binding of calcium to Tn-C abolishes the inhibitory action of Tn on actin filaments. The polypeptide is Troponin C, isoallergen Bla g 6.0301 (Blattella germanica (German cockroach)).